Reading from the N-terminus, the 479-residue chain is MGEYERTVFTRRITGVETEYGITCVGDNSRRRLGADEAARYMFRPVVEEWGSSNVFIPNGARLYLDVGSHPEYASAECDSLSQLIAYDRAGDKIVDQLAQRAETALATEGIGGRVYLFKNNLDSLGNSYGCHENYLVSRDVVLKTLGRQLLPFLITRQLICGAGSIQDGQFQVSQRADHVWEGVSSATTRSRPIINTRDEPHADSHRFRRLHVIVGDSNMSETTCALKIGSTQLVLEMIEAGALSHDLELSNEIAAIREISRDITGMAPVPLKAGTSMPAIEIQRRYAEKALCWLEQRGDTEGTPNAEMHKVVSLWLDTISAIESNDLQALSRDIDWAIKLSLLRRAQRRIGCSESDFTHPKLAQLDLAYHDIRAGRGVFPVLESKQLVNRWINDTDIEQATRIAPSTTRAALRGEFLTAAKKLQAPISADWLRLKVNRPEPQIIELTDPFENTDDRVDQLISYMRNHAASYSTDTAIS.

Glu-17 serves as a coordination point for Mg(2+). An ATP-binding site is contributed by Arg-62. Tyr-64 serves as a coordination point for Mg(2+). The active-site Proton acceptor is the Asp-66. Residue Glu-72 participates in Mg(2+) binding. Residues Ser-75 and Trp-432 each coordinate ATP.

It belongs to the Pup ligase/Pup deamidase family. Pup-conjugating enzyme subfamily.

The catalysed reaction is ATP + [prokaryotic ubiquitin-like protein]-L-glutamate + [protein]-L-lysine = ADP + phosphate + N(6)-([prokaryotic ubiquitin-like protein]-gamma-L-glutamyl)-[protein]-L-lysine.. Its pathway is protein degradation; proteasomal Pup-dependent pathway. It participates in protein modification; protein pupylation. Catalyzes the covalent attachment of the prokaryotic ubiquitin-like protein modifier Pup to the proteasomal substrate proteins, thereby targeting them for proteasomal degradation. This tagging system is termed pupylation. The ligation reaction involves the side-chain carboxylate of the C-terminal glutamate of Pup and the side-chain amino group of a substrate lysine. The chain is Pup--protein ligase from Corynebacterium diphtheriae (strain ATCC 700971 / NCTC 13129 / Biotype gravis).